Reading from the N-terminus, the 612-residue chain is UvrABC system protein C (612 aa).

The GIY-YIG domain occupies 20–98 (THSGVYRMLD…IKQHRPKYNI (79 aa)). In terms of domain architecture, UVR spans 208–243 (SSVLEEISANMYQASEDMEYEKAQVYRDQLVVLRKL).

This sequence belongs to the UvrC family. In terms of assembly, interacts with UvrB in an incision complex.

Its subcellular location is the cytoplasm. Its function is as follows. The UvrABC repair system catalyzes the recognition and processing of DNA lesions. UvrC both incises the 5' and 3' sides of the lesion. The N-terminal half is responsible for the 3' incision and the C-terminal half is responsible for the 5' incision. The polypeptide is UvrABC system protein C (Francisella tularensis subsp. holarctica (strain LVS)).